The sequence spans 230 residues: GTP cyclohydrolase III (230 aa).

The protein belongs to the archaeal-type GTP cyclohydrolase family.

The enzyme catalyses GTP + 3 H2O = 2-amino-5-formylamino-6-(5-phospho-D-ribosylamino)pyrimidin-4(3H)-one + 2 phosphate + 2 H(+). Functionally, catalyzes the formation of 2-amino-5-formylamino-6-ribofuranosylamino-4(3H)-pyrimidinone ribonucleotide monophosphate and inorganic phosphate from GTP. Also has an independent pyrophosphate phosphohydrolase activity. The polypeptide is GTP cyclohydrolase III (Saccharolobus islandicus (strain M.14.25 / Kamchatka #1) (Sulfolobus islandicus)).